The chain runs to 120 residues: Phosphoribosyl-ATP pyrophosphatase (120 aa).

A disordered region spans residues 97–120; sequence REGTSGLVEKASRPAKKDSGTADS. Positions 106 to 120 are enriched in basic and acidic residues; sequence KASRPAKKDSGTADS.

The protein belongs to the PRA-PH family.

The protein localises to the cytoplasm. The enzyme catalyses 1-(5-phospho-beta-D-ribosyl)-ATP + H2O = 1-(5-phospho-beta-D-ribosyl)-5'-AMP + diphosphate + H(+). It functions in the pathway amino-acid biosynthesis; L-histidine biosynthesis; L-histidine from 5-phospho-alpha-D-ribose 1-diphosphate: step 2/9. In Rhodopirellula baltica (strain DSM 10527 / NCIMB 13988 / SH1), this protein is Phosphoribosyl-ATP pyrophosphatase.